The chain runs to 369 residues: Lipoyl synthase, mitochondrial (369 aa).

The N-terminal 32 residues, Met1–Arg32, are a transit peptide targeting the mitochondrion. 7 residues coordinate [4Fe-4S] cluster: Cys106, Cys111, Cys117, Cys136, Cys140, Cys143, and Ser351. A Radical SAM core domain is found at Asn121–Leu340.

This sequence belongs to the radical SAM superfamily. Lipoyl synthase family. [4Fe-4S] cluster is required as a cofactor.

It is found in the mitochondrion. It carries out the reaction [[Fe-S] cluster scaffold protein carrying a second [4Fe-4S](2+) cluster] + N(6)-octanoyl-L-lysyl-[protein] + 2 oxidized [2Fe-2S]-[ferredoxin] + 2 S-adenosyl-L-methionine + 4 H(+) = [[Fe-S] cluster scaffold protein] + N(6)-[(R)-dihydrolipoyl]-L-lysyl-[protein] + 4 Fe(3+) + 2 hydrogen sulfide + 2 5'-deoxyadenosine + 2 L-methionine + 2 reduced [2Fe-2S]-[ferredoxin]. It functions in the pathway protein modification; protein lipoylation via endogenous pathway; protein N(6)-(lipoyl)lysine from octanoyl-[acyl-carrier-protein]: step 2/2. Functionally, catalyzes the radical-mediated insertion of two sulfur atoms into the C-6 and C-8 positions of the octanoyl moiety bound to the lipoyl domains of lipoate-dependent enzymes, thereby converting the octanoylated domains into lipoylated derivatives. This Eremothecium gossypii (strain ATCC 10895 / CBS 109.51 / FGSC 9923 / NRRL Y-1056) (Yeast) protein is Lipoyl synthase, mitochondrial.